A 188-amino-acid polypeptide reads, in one-letter code: Elongation factor P (188 aa).

At K34 the chain carries N6-(3,6-diaminohexanoyl)-5-hydroxylysine.

This sequence belongs to the elongation factor P family. Post-translationally, may be beta-lysylated on the epsilon-amino group of Lys-34 by the combined action of EpmA and EpmB, and then hydroxylated on the C5 position of the same residue by EpmC (if this protein is present). Lysylation is critical for the stimulatory effect of EF-P on peptide-bond formation. The lysylation moiety may extend toward the peptidyltransferase center and stabilize the terminal 3-CCA end of the tRNA. Hydroxylation of the C5 position on Lys-34 may allow additional potential stabilizing hydrogen-bond interactions with the P-tRNA.

It is found in the cytoplasm. Its pathway is protein biosynthesis; polypeptide chain elongation. Involved in peptide bond synthesis. Alleviates ribosome stalling that occurs when 3 or more consecutive Pro residues or the sequence PPG is present in a protein, possibly by augmenting the peptidyl transferase activity of the ribosome. Modification of Lys-34 is required for alleviation. The protein is Elongation factor P of Histophilus somni (strain 129Pt) (Haemophilus somnus).